Reading from the N-terminus, the 347-residue chain is NADH-quinone oxidoreductase subunit H 1 (347 aa).

Helical transmembrane passes span 14–34 (IMIG…AYVL), 50–70 (PNVV…KFVF), 83–103 (IFLL…AVIP), 115–135 (VGIL…IMGG), 161–181 (IGFV…TDIV), 198–218 (FLDW…ISAL), 258–278 (AICL…LPPV), 286–306 (VPGI…FAMV), and 321–341 (LGWK…AFVL).

This sequence belongs to the complex I subunit 1 family. In terms of assembly, NDH-1 is composed of 14 different subunits. Subunits NuoA, H, J, K, L, M, N constitute the membrane sector of the complex.

The protein localises to the cell inner membrane. The enzyme catalyses a quinone + NADH + 5 H(+)(in) = a quinol + NAD(+) + 4 H(+)(out). In terms of biological role, NDH-1 shuttles electrons from NADH, via FMN and iron-sulfur (Fe-S) centers, to quinones in the respiratory chain. The immediate electron acceptor for the enzyme in this species is believed to be ubiquinone. Couples the redox reaction to proton translocation (for every two electrons transferred, four hydrogen ions are translocated across the cytoplasmic membrane), and thus conserves the redox energy in a proton gradient. This subunit may bind ubiquinone. The chain is NADH-quinone oxidoreductase subunit H 1 from Rhizobium meliloti (strain 1021) (Ensifer meliloti).